The primary structure comprises 570 residues: Putative pyruvate decarboxylase C3G9.11c (570 aa).

Pyruvate contacts are provided by Asp30 and His119. Thiamine diphosphate is bound by residues Thr396 and 419-421 (GSI). Asp451 is a binding site for Mg(2+). Thiamine diphosphate-binding positions include 452 to 453 (GS) and 478 to 483 (NKGYTI). Mg(2+) contacts are provided by Asn478 and Gly480. Glu484 is a pyruvate binding site.

Belongs to the TPP enzyme family. In terms of assembly, homotetramer. Requires Mg(2+) as cofactor. It depends on thiamine diphosphate as a cofactor.

Its subcellular location is the cytoplasm. It localises to the nucleus. It carries out the reaction a 2-oxocarboxylate + H(+) = an aldehyde + CO2. The enzyme catalyses pyruvate + H(+) = acetaldehyde + CO2. The sequence is that of Putative pyruvate decarboxylase C3G9.11c from Schizosaccharomyces pombe (strain 972 / ATCC 24843) (Fission yeast).